The following is a 645-amino-acid chain: MEGSSYRVVFEKGGVYLHTSARKHQDPDSLIAGVIRVVEKDSDVFLHWAPVEEAGDPTQILFKKDPSRGEPSTSEEEPTFDPGYEPDWAVISTVRPQPHLAEPRKGAEPSSSRSSWAFSVSLGELKSIRRSKPGLSWAYLVLVTQAGGSLPALHFHRGGTRALLRVLSRYLLLASSPQDSRLYLVFPQDPSALSDSFHHLQLFDQDSSNVVSRFLQDPYSTTFSSFSRVTNFFRGALQPHPEGASSPNLPPLPDDEPEPGFEVISCVELGQRPTVERAPPVTEEEWNRYVGPEGRLQNVPELKNRIFSGGLSPGLRREAWKFLLGYLSWESSAEEHKAHVRKKTDEYFRMKLQWKSVSAEQERRNSLLHGYRSLIERDVSRTDRTNKFYEGPENPGLSLLHDILLTYCMYHFDLGYVQGMSDLLSPILFVVQNEVDAFWCFCGFMELVHGNFEESQETMKRQLGQLLLLLRVLDQPLCDFLDSQDSGSLCFCFRWLLIWFKREFPFPDVLRLWEVLWTGLPGPNLHLLVACAILDMERDTLMLSGFGSNEILKHINELTMKLSVEDVLTRAEALYRQLTACPELPHNVQEILGLAQPEEPSSPSPPVSPMPLSPTRAPLPPPLPEEVIPQPDSSLEILPEDEDGA.

The disordered stretch occupies residues 57-85 (PTQILFKKDPSRGEPSTSEEEPTFDPGYE). Positions 217 to 309 (DPYSTTFSSF…PELKNRIFSG (93 aa)) are required for interaction with OPTN. A Rab-GAP TBC domain is found at 310 to 520 (GLSPGLRREA…RLWEVLWTGL (211 aa)). A disordered region spans residues 596–645 (QPEEPSSPSPPVSPMPLSPTRAPLPPPLPEEVIPQPDSSLEILPEDEDGA). The span at 600-624 (PSSPSPPVSPMPLSPTRAPLPPPLP) shows a compositional bias: pro residues. Serine 602, serine 604, and serine 608 each carry phosphoserine. Threonine 615 carries the post-translational modification Phosphothreonine.

In terms of assembly, interacts with OPTN; this interaction mediates TBC1D17 transient association with Rab8.

Its subcellular location is the cytoplasmic vesicle. It is found in the autophagosome. The protein resides in the cytoplasm. The protein localises to the recycling endosome. In terms of biological role, probable GTPase-activating protein that inhibits RAB8A/B function. Reduces Rab8 recruitment to tubules emanating from the endocytic recycling compartment (ERC) and inhibits Rab8-mediated endocytic trafficking, such as that of transferrin receptor (TfR). Involved in regulation of autophagy. This is TBC1 domain family member 17 (Tbc1d17) from Mus musculus (Mouse).